The following is a 222-amino-acid chain: Probable fructose-6-phosphate aldolase (222 aa).

The active-site Schiff-base intermediate with substrate is the K87.

The protein belongs to the transaldolase family. Type 3A subfamily.

Its subcellular location is the cytoplasm. The enzyme catalyses beta-D-fructose 6-phosphate = dihydroxyacetone + D-glyceraldehyde 3-phosphate. Its function is as follows. Catalyzes the reversible formation of fructose 6-phosphate from dihydroxyacetone and D-glyceraldehyde 3-phosphate via an aldolization reaction. In Streptococcus pneumoniae (strain ATCC 700669 / Spain 23F-1), this protein is Probable fructose-6-phosphate aldolase.